Consider the following 130-residue polypeptide: Small ribosomal subunit protein uS8 (130 aa).

Belongs to the universal ribosomal protein uS8 family. As to quaternary structure, part of the 30S ribosomal subunit. Contacts proteins S5 and S12.

Its function is as follows. One of the primary rRNA binding proteins, it binds directly to 16S rRNA central domain where it helps coordinate assembly of the platform of the 30S subunit. The polypeptide is Small ribosomal subunit protein uS8 (Shewanella sediminis (strain HAW-EB3)).